The chain runs to 638 residues: Nitrous-oxide reductase (638 aa).

Positions 1-52 (MSDKDSKNTPQVPEKLGLSRRGFLGASAVTGAAVAATALGGAVMTRESWAQA) form a signal peptide, tat-type signal. Positions 129, 130, and 178 each coordinate Cu cation. Positions 256, 259, 267, 273, and 324 each coordinate Ca(2+). Residues His326, His382, and His433 each contribute to the Cu cation site. Residues Lys454 and Glu469 each contribute to the Ca(2+) site. The Cu cation site is built by His494, His583, Cys618, Trp620, Cys622, His626, and Met629. The segment at 542–638 (NKVRVYMTSM…MVGRMMVEPA (97 aa)) is COX2-like.

The protein belongs to the NosZ family. In the C-terminal section; belongs to the cytochrome c oxidase subunit 2 family. Homodimer. It depends on Ca(2+) as a cofactor. The cofactor is Cu cation. In terms of processing, predicted to be exported by the Tat system. The position of the signal peptide cleavage has not been experimentally proven. The N-terminus is blocked.

Its subcellular location is the periplasm. It catalyses the reaction N2 + 2 Fe(III)-[cytochrome c] + H2O = nitrous oxide + 2 Fe(II)-[cytochrome c] + 2 H(+). It participates in nitrogen metabolism; nitrate reduction (denitrification); dinitrogen from nitrate: step 4/4. In terms of biological role, nitrous-oxide reductase is part of a bacterial respiratory system which is activated under anaerobic conditions in the presence of nitrate or nitrous oxide. In Stutzerimonas stutzeri (Pseudomonas stutzeri), this protein is Nitrous-oxide reductase (nosZ).